A 250-amino-acid polypeptide reads, in one-letter code: GTP cyclohydrolase 1 type 2 homolog (250 aa).

Residues His63, His64, Asp100, His218, and Glu222 each coordinate a divalent metal cation.

Belongs to the GTP cyclohydrolase I type 2/NIF3 family. In terms of assembly, homohexamer.

This Pyrococcus horikoshii (strain ATCC 700860 / DSM 12428 / JCM 9974 / NBRC 100139 / OT-3) protein is GTP cyclohydrolase 1 type 2 homolog.